Here is a 634-residue protein sequence, read N- to C-terminus: Protein IcfG (634 aa).

Positions 306-361 (HHSTVPILDLTKASQAIAAGDLDYEININQGNRQDEIGILGNSFIYMKNQIKTLIA) constitute an HAMP domain. Residues 385–633 (PISLPDLQQW…DDITMIAVYR (249 aa)) enclose the PPM-type phosphatase domain.

Functionally, involved in cross-regulation of inorganic carbon and glucose metabolisms. In Synechocystis sp. (strain ATCC 27184 / PCC 6803 / Kazusa), this protein is Protein IcfG (icfG).